We begin with the raw amino-acid sequence, 468 residues long: MARVLRDPHWVAVGLLTWAALGLLVAGHEGHGDLHRDVEEDFHGHSHGHSHEDFHHGHSHGHGHTHESIWHGHAHSHDHGHSREDVHHGHSHGHSHDSLHHRGHGHSHGASREAGAPGIKHHLDTVTLWAYALGATVLISAAPFFVLFLIPVESNSPRHRSLLQILLSFASGGLLGDAFLHLIPHALEPHSHDTPAQPGHGHSHSGQGPILSVGLWVLSGIVAFLVVEKFVRHVKGGHGHAHAHGHGHSHGDSHAHGHSHAHGDRHECPSKGKPSSEDEKEAGGLRKRRGGDTGPRDGPLKPQNPEEEKTGSDLRVSGYLNLAADLAHNFTDGLAIGASFRGGRGLGILTTMTVLLHEVPHEVGDFAILVQSGCSKKQAMRLQLLTAIGALAGTACALLTEGGAVGSEVAGGAGPGWVLPFTAGGFIYVATVSVLPELLREASPLQSLLEVLGLLGGVAMMVLIAHLE.

Residues 10–30 form a helical membrane-spanning segment; it reads WVAVGLLTWAALGLLVAGHEG. Basic and acidic residues-rich tracts occupy residues 36 to 56 and 64 to 100; these read RDVE…DFHH and HTHE…DSLH. Residues 36–116 form a disordered region; the sequence is RDVEEDFHGH…SHGASREAGA (81 aa). Residue His-64 is modified to Pros-methylhistidine. A run of 3 helical transmembrane segments spans residues 132–152, 163–183, and 208–228; these read ALGA…LIPV, LQIL…LHLI, and GPIL…LVVE. Over residues 237 to 248 the composition is skewed to basic residues; that stretch reads GHGHAHAHGHGH. Positions 237-313 are disordered; that stretch reads GHGHAHAHGH…NPEEEKTGSD (77 aa). The segment covering 249–312 has biased composition (basic and acidic residues); that stretch reads SHGDSHAHGH…QNPEEEKTGS (64 aa). A run of 3 helical transmembrane segments spans residues 385–405, 409–429, and 447–467; these read LTAI…GGAV, VAGG…FIYV, and SLLE…IAHL.

Belongs to the ZIP transporter (TC 2.A.5) family. KE4/Catsup subfamily. In terms of assembly, homodimer. Rapidly phosphorylated by CK2 following Zn(2+) treatment. This phosphorylation is required for efficient cytosolic Zn(2+) release.

Its subcellular location is the endoplasmic reticulum membrane. It localises to the golgi apparatus. It is found in the cis-Golgi network membrane. The enzyme catalyses Zn(2+)(in) = Zn(2+)(out). Transports Zn(2+) from the endoplasmic reticulum (ER)/Golgi apparatus to the cytosol, playing an essential role in the regulation of cytosolic zinc levels. Acts as a gatekeeper of zinc release from intracellular stores, requiring post-translational activation by phosphorylation on residues, resulting in activation of multiple downstream pathways leading to cell growth and proliferation. Has an essential role in B cell development and is required for proper B cell receptor signaling. Plays an important role in maintaining intestinal epithelial homeostasis and skin dermis development by regulating ER function. Controls cell signaling pathways involved in glucose metabolism in skeletal muscle. Has a protective role against ER stress in different biological contexts. Mediates Zn(2+)-induced ferroptosis. The sequence is that of Zinc transporter SLC39A7 from Rattus norvegicus (Rat).